A 264-amino-acid polypeptide reads, in one-letter code: Thymidylate synthase (264 aa).

Arg-21 lines the dUMP pocket. His-51 lines the (6R)-5,10-methylene-5,6,7,8-tetrahydrofolate pocket. Position 126-127 (126-127 (RR)) interacts with dUMP. Cys-146 (nucleophile) is an active-site residue. DUMP-binding positions include 166 to 169 (RSAD), Asn-177, and 207 to 209 (HIY). Position 169 (Asp-169) interacts with (6R)-5,10-methylene-5,6,7,8-tetrahydrofolate. Ser-263 lines the (6R)-5,10-methylene-5,6,7,8-tetrahydrofolate pocket.

This sequence belongs to the thymidylate synthase family. Bacterial-type ThyA subfamily. As to quaternary structure, homodimer.

It localises to the cytoplasm. It carries out the reaction dUMP + (6R)-5,10-methylene-5,6,7,8-tetrahydrofolate = 7,8-dihydrofolate + dTMP. Its pathway is pyrimidine metabolism; dTTP biosynthesis. Its function is as follows. Catalyzes the reductive methylation of 2'-deoxyuridine-5'-monophosphate (dUMP) to 2'-deoxythymidine-5'-monophosphate (dTMP) while utilizing 5,10-methylenetetrahydrofolate (mTHF) as the methyl donor and reductant in the reaction, yielding dihydrofolate (DHF) as a by-product. This enzymatic reaction provides an intracellular de novo source of dTMP, an essential precursor for DNA biosynthesis. This chain is Thymidylate synthase, found in Halalkalibacterium halodurans (strain ATCC BAA-125 / DSM 18197 / FERM 7344 / JCM 9153 / C-125) (Bacillus halodurans).